The sequence spans 538 residues: Atos homolog protein B (538 aa).

Over residues 1 to 18 (MRHVQAEPSPSSEPEAGP) the composition is skewed to low complexity. 3 disordered regions span residues 1 to 103 (MRHV…GLLG), 156 to 185 (HTRD…QLHT), and 197 to 308 (GGKS…PMGR). Over residues 227 to 238 (HTPPGPGPPGPC) the composition is skewed to pro residues. Residues Ser254 and Ser255 each carry the phosphoserine modification. Positions 274–286 (AANSSDAKATSFW) are enriched in polar residues. The tract at residues 348–430 (LLGNFEESLL…VPKVGTVQVT (83 aa)) is required for macropage invasion. A transactivation domain 1 (TAD1) region spans residues 436–444 (QTVVKMFLV).

Belongs to the ATOS family.

It is found in the nucleus. Its function is as follows. Transcription regulator that may syncronize transcriptional and translational programs. This is Atos homolog protein B from Macaca fascicularis (Crab-eating macaque).